Here is a 208-residue protein sequence, read N- to C-terminus: ATP synthase subunit b (208 aa).

Residues 1 to 27 (MVKAKKLVFKWSLLVFSFFTLSLFLVS) form the signal peptide. A lipid anchor (N-palmitoyl cysteine) is attached at cysteine 28. Cysteine 28 carries S-diacylglycerol cysteine lipidation. A helical transmembrane segment spans residues 49–69 (WVFITHLLAFFILLTLMIFLF).

Belongs to the ATPase B chain family. As to quaternary structure, F-type ATPases have 2 components, F(1) - the catalytic core - and F(0) - the membrane proton channel. F(1) has five subunits: alpha(3), beta(3), gamma(1), delta(1), epsilon(1). F(0) has three main subunits: a(1), b(2) and c(10-14). The alpha and beta chains form an alternating ring which encloses part of the gamma chain. F(1) is attached to F(0) by a central stalk formed by the gamma and epsilon chains, while a peripheral stalk is formed by the delta and b chains.

The protein localises to the cell membrane. Its function is as follows. F(1)F(0) ATP synthase produces ATP from ADP in the presence of a proton or sodium gradient. F-type ATPases consist of two structural domains, F(1) containing the extramembraneous catalytic core and F(0) containing the membrane proton channel, linked together by a central stalk and a peripheral stalk. During catalysis, ATP synthesis in the catalytic domain of F(1) is coupled via a rotary mechanism of the central stalk subunits to proton translocation. Functionally, component of the F(0) channel, it forms part of the peripheral stalk, linking F(1) to F(0). The protein is ATP synthase subunit b of Mycoplasma genitalium (strain ATCC 33530 / DSM 19775 / NCTC 10195 / G37) (Mycoplasmoides genitalium).